Here is a 1428-residue protein sequence, read N- to C-terminus: DNA polymerase III PolC-type (1428 aa).

The region spanning 414 to 570 (FVVFDVETTG…YDAEATGYLL (157 aa)) is the Exonuclease domain.

It belongs to the DNA polymerase type-C family. PolC subfamily.

The protein localises to the cytoplasm. It catalyses the reaction DNA(n) + a 2'-deoxyribonucleoside 5'-triphosphate = DNA(n+1) + diphosphate. Required for replicative DNA synthesis. This DNA polymerase also exhibits 3' to 5' exonuclease activity. In Oceanobacillus iheyensis (strain DSM 14371 / CIP 107618 / JCM 11309 / KCTC 3954 / HTE831), this protein is DNA polymerase III PolC-type.